Here is a 79-residue protein sequence, read N- to C-terminus: Ketoisovalerate oxidoreductase subunit VorC (79 aa).

4Fe-4S ferredoxin-type domains lie at 4–33 (AYPV…MSNK) and 40–70 (HYVE…VHIE). The [4Fe-4S] cluster site is built by C13, C16, C19, C23, C49, C52, C55, and C59.

In terms of assembly, heterotrimer of the VorA, VorB and VorC subunits. [4Fe-4S] cluster serves as cofactor.

The enzyme catalyses 3-methyl-2-oxobutanoate + 2 oxidized [2Fe-2S]-[ferredoxin] + CoA = 2-methylpropanoyl-CoA + 2 reduced [2Fe-2S]-[ferredoxin] + CO2 + H(+). In Methanothermobacter marburgensis (strain ATCC BAA-927 / DSM 2133 / JCM 14651 / NBRC 100331 / OCM 82 / Marburg) (Methanobacterium thermoautotrophicum), this protein is Ketoisovalerate oxidoreductase subunit VorC (vorC).